We begin with the raw amino-acid sequence, 299 residues long: MTEQTTTPDGLVIVDKPSGFTSHDVVAKMRGIARTRRVGHAGTLDPMATGVLVLGVQRATKLLGHLALTEKEYLGTIRLGQDTVTDDAEGEITSSTDASGVTRASIDAGVAALTGRIMQVPSKVSAIKIDGKRSYARVRGGEEFEIPARPVTISSFRVYDVREAVAEDGTPVLDLVVSVVCSSGTYIRAIARDLGAGLGVGGHLTALRRTRVGPYGLDAARTLDQHQEELTVMPVAEAAASAFPRWDVDEKRAKLLLNGVRLDMPAHPPGPVAVFGPDGAFLVLVEEEKGKAKSLAVFA.

Asp-45 acts as the Nucleophile in catalysis.

This sequence belongs to the pseudouridine synthase TruB family. Type 1 subfamily.

It catalyses the reaction uridine(55) in tRNA = pseudouridine(55) in tRNA. In terms of biological role, responsible for synthesis of pseudouridine from uracil-55 in the psi GC loop of transfer RNAs. This chain is tRNA pseudouridine synthase B, found in Streptomyces griseus subsp. griseus (strain JCM 4626 / CBS 651.72 / NBRC 13350 / KCC S-0626 / ISP 5235).